Consider the following 124-residue polypeptide: Fluoride-specific ion channel FluC (124 aa).

The next 4 membrane-spanning stretches (helical) occupy residues 6–26 (LLIG…SGIV), 37–57 (LAVN…SLFA), 69–89 (TGFC…FVLV), and 92–112 (GLLF…LIMV). G73 and T76 together coordinate Na(+).

This sequence belongs to the fluoride channel Fluc/FEX (TC 1.A.43) family.

It localises to the cell membrane. It catalyses the reaction fluoride(in) = fluoride(out). Na(+) is not transported, but it plays an essential structural role and its presence is essential for fluoride channel function. Its function is as follows. Fluoride-specific ion channel. Important for reducing fluoride concentration in the cell, thus reducing its toxicity. This is Fluoride-specific ion channel FluC from Methanocaldococcus jannaschii (strain ATCC 43067 / DSM 2661 / JAL-1 / JCM 10045 / NBRC 100440) (Methanococcus jannaschii).